Here is a 409-residue protein sequence, read N- to C-terminus: Peptidase T (409 aa).

Residue His-78 coordinates Zn(2+). Asp-80 is an active-site residue. Asp-140 is a binding site for Zn(2+). Catalysis depends on Glu-173, which acts as the Proton acceptor. Positions 174, 196, and 379 each coordinate Zn(2+).

It belongs to the peptidase M20B family. Zn(2+) is required as a cofactor.

It is found in the cytoplasm. It carries out the reaction Release of the N-terminal residue from a tripeptide.. Functionally, cleaves the N-terminal amino acid of tripeptides. In Escherichia coli (strain SE11), this protein is Peptidase T.